A 417-amino-acid chain; its full sequence is uncharacterized protein (417 aa).

Residues 10–30 (ALVCFSILSILVLACGCVNTP) form a helical membrane-spanning segment. Positions 84 to 106 (QENHPLQSNQNYEQTNGNFNEEN) are disordered. The segment covering 86-106 (NHPLQSNQNYEQTNGNFNEEN) has biased composition (polar residues). The chain crosses the membrane as a helical span at residues 148–168 (LYYIKVIDPIVGGLAGIDIYV).

It is found in the cell membrane. This is an uncharacterized protein from Methanocaldococcus jannaschii (strain ATCC 43067 / DSM 2661 / JAL-1 / JCM 10045 / NBRC 100440) (Methanococcus jannaschii).